We begin with the raw amino-acid sequence, 334 residues long: Putative transport protein MTH_1211 (334 aa).

The next 8 helical transmembrane spans lie at 24–44 (AIVV…AYIV), 60–80 (VSII…LVFT), 84–104 (IINS…PGAG), 131–151 (YVVA…VFLS), 189–209 (VLLS…LMAA), 220–240 (AILL…GPWA), 255–275 (ILRG…DIYL), and 289–309 (MIFL…GFIV).

This sequence belongs to the autoinducer-2 exporter (AI-2E) (TC 2.A.86) family.

Its subcellular location is the cell membrane. This Methanothermobacter thermautotrophicus (strain ATCC 29096 / DSM 1053 / JCM 10044 / NBRC 100330 / Delta H) (Methanobacterium thermoautotrophicum) protein is Putative transport protein MTH_1211.